A 545-amino-acid polypeptide reads, in one-letter code: CTP synthase (545 aa).

Residues 1-265 (MSRFIFVTGG…DAIVVEKFGL (265 aa)) form an amidoligase domain region. CTP is bound at residue Ser-13. UTP is bound at residue Ser-13. 14 to 19 (SLGKGI) is a binding site for ATP. An L-glutamine-binding site is contributed by Tyr-54. Asp-71 contacts ATP. Residues Asp-71 and Glu-139 each coordinate Mg(2+). CTP contacts are provided by residues 146 to 148 (DIE), 186 to 191 (KTKPTQ), and Lys-222. UTP contacts are provided by residues 186–191 (KTKPTQ) and Lys-222. Residues 290-541 (TVGMVGKYIE…VAAALAEQKA (252 aa)) form the Glutamine amidotransferase type-1 domain. Gly-351 lines the L-glutamine pocket. Cys-378 functions as the Nucleophile; for glutamine hydrolysis in the catalytic mechanism. L-glutamine-binding positions include 379 to 382 (LGMQ), Glu-402, and Arg-469. Active-site residues include His-514 and Glu-516.

Belongs to the CTP synthase family. As to quaternary structure, homotetramer.

The catalysed reaction is UTP + L-glutamine + ATP + H2O = CTP + L-glutamate + ADP + phosphate + 2 H(+). It carries out the reaction L-glutamine + H2O = L-glutamate + NH4(+). It catalyses the reaction UTP + NH4(+) + ATP = CTP + ADP + phosphate + 2 H(+). It functions in the pathway pyrimidine metabolism; CTP biosynthesis via de novo pathway; CTP from UDP: step 2/2. Allosterically activated by GTP, when glutamine is the substrate; GTP has no effect on the reaction when ammonia is the substrate. The allosteric effector GTP functions by stabilizing the protein conformation that binds the tetrahedral intermediate(s) formed during glutamine hydrolysis. Inhibited by the product CTP, via allosteric rather than competitive inhibition. In terms of biological role, catalyzes the ATP-dependent amination of UTP to CTP with either L-glutamine or ammonia as the source of nitrogen. Regulates intracellular CTP levels through interactions with the four ribonucleotide triphosphates. This chain is CTP synthase, found in Alcanivorax borkumensis (strain ATCC 700651 / DSM 11573 / NCIMB 13689 / SK2).